The primary structure comprises 299 residues: Recombination-associated protein RdgC (299 aa).

Belongs to the RdgC family.

The protein resides in the cytoplasm. It is found in the nucleoid. May be involved in recombination. The protein is Recombination-associated protein RdgC of Neisseria meningitidis serogroup A / serotype 4A (strain DSM 15465 / Z2491).